We begin with the raw amino-acid sequence, 213 residues long: Redox-sensing transcriptional repressor Rex (213 aa).

A DNA-binding region (H-T-H motif) is located at residues 18–57; that stretch reads LYYRFLKNLHASGKQRVSSAELSEAVKVDPATIRRDFSYF. 92-97 provides a ligand contact to NAD(+); it reads GVGNLG.

It belongs to the transcriptional regulatory Rex family. In terms of assembly, homodimer.

Its subcellular location is the cytoplasm. Its function is as follows. Modulates transcription in response to changes in cellular NADH/NAD(+) redox state. This Geobacillus kaustophilus (strain HTA426) protein is Redox-sensing transcriptional repressor Rex.